A 312-amino-acid polypeptide reads, in one-letter code: Protoheme IX farnesyltransferase (312 aa).

8 helical membrane passes run 33-53 (VMLL…VSIN), 54-74 (PLYG…AGAL), 105-125 (FIFG…FVNW), 126-146 (FAAL…TIWL), 154-174 (IVIG…AATG), 181-201 (FLLF…LSLF), 243-263 (IIGF…IIFI), and 291-311 (FYLA…CFII).

Belongs to the UbiA prenyltransferase family. Protoheme IX farnesyltransferase subfamily.

The protein resides in the cell inner membrane. It carries out the reaction heme b + (2E,6E)-farnesyl diphosphate + H2O = Fe(II)-heme o + diphosphate. It participates in porphyrin-containing compound metabolism; heme O biosynthesis; heme O from protoheme: step 1/1. Converts heme B (protoheme IX) to heme O by substitution of the vinyl group on carbon 2 of heme B porphyrin ring with a hydroxyethyl farnesyl side group. This chain is Protoheme IX farnesyltransferase, found in Bartonella henselae (strain ATCC 49882 / DSM 28221 / CCUG 30454 / Houston 1) (Rochalimaea henselae).